Here is a 217-residue protein sequence, read N- to C-terminus: Ras-related protein Rab-19 (217 aa).

11 residues coordinate GTP: Ser-26, Val-28, Gly-29, Lys-30, Thr-31, Cys-32, Tyr-42, Ser-43, Glu-44, Ser-45, and Thr-49. Thr-31 contacts Mg(2+). The Switch 1 motif lies at 39–54 (SGVYSESQQNTIGVDF). Positions 49 and 72 each coordinate Mg(2+). The Switch 2 signature appears at 74–89 (AGQERFRTITQSYYRS). GTP contacts are provided by Gly-75, Asn-130, Lys-131, Asp-133, Ser-161, Ala-162, and Lys-163. 2 S-geranylgeranyl cysteine lipidation sites follow: Cys-215 and Cys-217. Cysteine methyl ester is present on Cys-217.

The protein belongs to the small GTPase superfamily. Rab family. It depends on Mg(2+) as a cofactor. As to expression, expressed in a tissue-specific manner. Detected at high levels in intestine, lung and spleen, and at a lower level in kidney.

It is found in the cell membrane. The enzyme catalyses GTP + H2O = GDP + phosphate + H(+). With respect to regulation, regulated by guanine nucleotide exchange factors (GEFs) which promote the exchange of bound GDP for free GTP. Regulated by GTPase activating proteins (GAPs) which increase the GTP hydrolysis activity. Inhibited by GDP dissociation inhibitors (GDIs). Functionally, the small GTPases Rab are key regulators of intracellular membrane trafficking, from the formation of transport vesicles to their fusion with membranes. Rabs cycle between an inactive GDP-bound form and an active GTP-bound form that is able to recruit to membranes different set of downstream effectors directly responsible for vesicle formation, movement, tethering and fusion. This chain is Ras-related protein Rab-19, found in Mus musculus (Mouse).